The sequence spans 213 residues: Adenylate kinase (213 aa).

An ATP-binding site is contributed by 10–15 (GAGKGT). Residues 30 to 59 (STGDMLRAALKEGTPLGLEAKKYMDQGALV) form an NMP region. AMP is bound by residues Thr31, Arg36, 57 to 59 (ALV), 85 to 88 (GFPR), and Gln92. Residues 126–163 (GRRTCRSCGAGFHVMFDPPKTDGKCDKCGGELYQRDDD) are LID. Arg127 serves as a coordination point for ATP. Residues Cys130, Cys133, Cys150, and Cys153 each coordinate Zn(2+). AMP-binding residues include Arg160 and Arg171. An ATP-binding site is contributed by Gly199.

This sequence belongs to the adenylate kinase family. As to quaternary structure, monomer.

The protein localises to the cytoplasm. It catalyses the reaction AMP + ATP = 2 ADP. Its pathway is purine metabolism; AMP biosynthesis via salvage pathway; AMP from ADP: step 1/1. In terms of biological role, catalyzes the reversible transfer of the terminal phosphate group between ATP and AMP. Plays an important role in cellular energy homeostasis and in adenine nucleotide metabolism. This chain is Adenylate kinase, found in Syntrophobacter fumaroxidans (strain DSM 10017 / MPOB).